The primary structure comprises 343 residues: Mesaconyl-CoA hydratase (343 aa).

The 70-residue stretch at 47–116 (SDEFARACGL…STVIGLKENS (70 aa)) folds into the MaoC-like domain. Substrate is bound by residues 60–63 (PVDE), 83–86 (VANL), and 94–96 (LKP).

The enzyme catalyses (2R,3S)-beta-methylmalyl-CoA = 2-methylfumaryl-CoA + H2O. In terms of biological role, involved in the ethylmalonyl-CoA pathway for acetate assimilation. Catalyzes the reversible hydration of mesaconyl-CoA (2-methylfumaryl-CoA) to yield beta-methylmalyl-CoA ((2R,3S)-beta-methylmalyl-CoA). This is Mesaconyl-CoA hydratase (mch) from Cereibacter sphaeroides (strain ATCC 17023 / DSM 158 / JCM 6121 / CCUG 31486 / LMG 2827 / NBRC 12203 / NCIMB 8253 / ATH 2.4.1.) (Rhodobacter sphaeroides).